We begin with the raw amino-acid sequence, 611 residues long: Procollagen galactosyltransferase 1-A (611 aa).

An N-terminal signal peptide occupies residues Met-1–Ala-24. 5 N-linked (GlcNAc...) asparagine glycosylation sites follow: Asn-85, Asn-173, Asn-312, Asn-370, and Asn-568. The segment covering Trp-575–Ser-591 has biased composition (basic and acidic residues). Residues Trp-575–Leu-611 are disordered. The short motif at Arg-608–Leu-611 is the Prevents secretion from ER element.

Belongs to the glycosyltransferase 25 family.

It is found in the endoplasmic reticulum lumen. The catalysed reaction is (5R)-5-hydroxy-L-lysyl-[collagen] + UDP-alpha-D-galactose = (5R)-5-O-(beta-D-galactosyl)-5-hydroxy-L-lysyl-[collagen] + UDP + H(+). In terms of biological role, beta-galactosyltransferase that transfers beta-galactose to hydroxylysine residues of type I collagen. By acting on collagen glycosylation, facilitates the formation of collagen triple helix. The protein is Procollagen galactosyltransferase 1-A (colgalt1-a) of Xenopus laevis (African clawed frog).